A 440-amino-acid polypeptide reads, in one-letter code: Ferredoxin--NADP reductase (440 aa).

Residues 17–75 (SRVFVYEVVGMRQNEETDQTNYPIRKSGSVFIRVPYNRMNQEMQRITRLGGKIVSIQTV) form the CpcD-like domain. The interval 98-142 (AKSEGNGKATPVKTDSGAKGFAKPPAEEQLKKKDNKGNTMTQAKA) is disordered. Residues 122–133 (PAEEQLKKKDNK) show a composition bias toward basic and acidic residues. The region spanning 155 to 279 (NAPFIGKVIS…TGPVGKEMLL (125 aa)) is the FAD-binding FR-type domain. Residues 214-217 (RLYS), 235-237 (CVR), Tyr-241, 253-255 (VCS), and Thr-294 contribute to the FAD site. Residues Ser-217 and Arg-237 each contribute to the NADP(+) site. NADP(+) contacts are provided by residues Thr-294, 330 to 331 (VP), 360 to 361 (SR), 370 to 374 (RMYIQ), 399 to 400 (GL), and Glu-438.

Belongs to the ferredoxin--NADP reductase type 1 family. The cofactor is FAD.

It localises to the cellular thylakoid membrane. The enzyme catalyses 2 reduced [2Fe-2S]-[ferredoxin] + NADP(+) + H(+) = 2 oxidized [2Fe-2S]-[ferredoxin] + NADPH. This is Ferredoxin--NADP reductase (petH) from Nostoc sp. (strain PCC 7120 / SAG 25.82 / UTEX 2576).